The chain runs to 99 residues: Orphan antixoxin protein TacA (99 aa).

It belongs to the TacA antitoxin family.

In terms of biological role, putative antitoxin component of a toxin-antitoxin (TA) system; its cognate toxin (usually a tRNA acetylase) is unknown. In Haemophilus influenzae (strain ATCC 51907 / DSM 11121 / KW20 / Rd), this protein is Orphan antixoxin protein TacA.